The following is a 501-amino-acid chain: Cytokinin dehydrogenase 2 (501 aa).

Positions 1-22 (MANLRLMITLITVLMITKSSNG) are cleaved as a signal peptide. 2 N-linked (GlcNAc...) asparagine glycosylation sites follow: asparagine 32 and asparagine 51. The 174-residue stretch at 53–226 (TTVTPGGVIC…TRARIVLDHA (174 aa)) folds into the FAD-binding PCMH-type domain. The FAD site is built by alanine 87, glycine 89, and glycine 91. Histidine 92 carries the pros-8alpha-FAD histidine modification. FAD contacts are provided by serine 93 and glutamine 97. N-linked (GlcNAc...) asparagine glycosylation is present at asparagine 107. FAD is bound by residues aspartate 150, threonine 155, serine 161, isoleucine 165, isoleucine 216, tyrosine 460, serine 495, and glutamine 498.

This sequence belongs to the oxygen-dependent FAD-linked oxidoreductase family. The cofactor is FAD. As to expression, expressed in the shoot apex, in stipules, and occasionally in the most apical part of the inflorescence stems. Not detected in roots.

Its subcellular location is the endoplasmic reticulum. The protein resides in the secreted. The protein localises to the extracellular space. It catalyses the reaction N(6)-dimethylallyladenine + A + H2O = 3-methyl-2-butenal + adenine + AH2. Its function is as follows. Catalyzes the oxidation of cytokinins, a family of N(6)-substituted adenine derivatives that are plant hormones, where the substituent is an isopentenyl group. Modulates asymmetric cytokinin signaling in emerged lateral roots. Its activity determines cell elongation and number in emerged lateral roots and defines angular growth of lateral roots. The sequence is that of Cytokinin dehydrogenase 2 (CKX2) from Arabidopsis thaliana (Mouse-ear cress).